A 327-amino-acid polypeptide reads, in one-letter code: Fructose import binding protein FruE (327 aa).

The N-terminal stretch at 1 to 22 is a signal peptide; the sequence is MKNWKKAIALVASAAALVSVAA. The N-palmitoyl cysteine moiety is linked to residue cysteine 23. Cysteine 23 is lipidated: S-diacylglycerol cysteine.

The protein belongs to the bacterial solute-binding protein 2 family. As to quaternary structure, the complex is composed of an ATP-binding protein (FruK), two transmembrane proteins (FruF and FruG) and a solute-binding protein (FruE).

The protein resides in the cell membrane. Functionally, part of the high-affinity ABC transporter complex FruEKFG involved in fructose uptake. Can also transport ribose and xylose, with lower affinity. Binds fructose, ribose and xylose, with fructose as the preferred substrate. This chain is Fructose import binding protein FruE, found in Bifidobacterium longum (strain NCC 2705).